Here is a 255-residue protein sequence, read N- to C-terminus: uncharacterized protein (255 aa).

The signal sequence occupies residues 1 to 23 (MKRLNKLVLGIIFLFLVISITAG). A lipid anchor (N-palmitoyl cysteine) is attached at C24. The S-diacylglycerol cysteine moiety is linked to residue C24.

This sequence belongs to the staphylococcal tandem lipoprotein family.

The protein resides in the cell membrane. This is an uncharacterized protein from Staphylococcus aureus (strain USA300).